We begin with the raw amino-acid sequence, 450 residues long: Phosphoglucosamine mutase (450 aa).

Ser101 functions as the Phosphoserine intermediate in the catalytic mechanism. Mg(2+) contacts are provided by Ser101, Asp242, Asp244, and Asp246. Phosphoserine is present on Ser101.

The protein belongs to the phosphohexose mutase family. Mg(2+) is required as a cofactor. In terms of processing, activated by phosphorylation.

It carries out the reaction alpha-D-glucosamine 1-phosphate = D-glucosamine 6-phosphate. Catalyzes the conversion of glucosamine-6-phosphate to glucosamine-1-phosphate. The protein is Phosphoglucosamine mutase of Rhodopseudomonas palustris (strain BisB5).